The chain runs to 397 residues: GTPase Obg (397 aa).

Residues 1–159 (MKFVDEAEIR…RMLKLELMLL (159 aa)) form the Obg domain. Positions 22-44 (SFRREKYVPDGGPDGGDGGDGGS) are disordered. Residues 33 to 43 (GPDGGDGGDGG) are compositionally biased toward gly residues. One can recognise an OBG-type G domain in the interval 160–333 (ADVGLLGMPN…LCIKVMDFIE (174 aa)). GTP is bound by residues 166–173 (GMPNAGKS), 191–195 (FTTLV), 213–216 (DIPG), 283–286 (NKVD), and 314–316 (SAV). Mg(2+)-binding residues include serine 173 and threonine 193. The tract at residues 359-389 (TVENYEDDDDFDDDDDDDFDGDDDDDFDGDD) is disordered. Residues 361–389 (ENYEDDDDFDDDDDDDFDGDDDDDFDGDD) show a composition bias toward acidic residues.

This sequence belongs to the TRAFAC class OBG-HflX-like GTPase superfamily. OBG GTPase family. As to quaternary structure, monomer. It depends on Mg(2+) as a cofactor.

The protein resides in the cytoplasm. An essential GTPase which binds GTP, GDP and possibly (p)ppGpp with moderate affinity, with high nucleotide exchange rates and a fairly low GTP hydrolysis rate. Plays a role in control of the cell cycle, stress response, ribosome biogenesis and in those bacteria that undergo differentiation, in morphogenesis control. The polypeptide is GTPase Obg (Pseudoalteromonas atlantica (strain T6c / ATCC BAA-1087)).